A 180-amino-acid polypeptide reads, in one-letter code: Large ribosomal subunit protein uL6 (180 aa).

Belongs to the universal ribosomal protein uL6 family. As to quaternary structure, part of the 50S ribosomal subunit.

Its function is as follows. This protein binds to the 23S rRNA, and is important in its secondary structure. It is located near the subunit interface in the base of the L7/L12 stalk, and near the tRNA binding site of the peptidyltransferase center. The polypeptide is Large ribosomal subunit protein uL6 (Caldanaerobacter subterraneus subsp. tengcongensis (strain DSM 15242 / JCM 11007 / NBRC 100824 / MB4) (Thermoanaerobacter tengcongensis)).